A 127-amino-acid polypeptide reads, in one-letter code: Large-conductance mechanosensitive channel (127 aa).

A run of 3 helical transmembrane segments spans residues 9-29 (EFAMRGNVMDLAVAVVMGVAF), 32-52 (IVTALVDGIIMPCVGLLLGGV), and 75-95 (VIDFIIVAFAIFVLIKLINLL).

This sequence belongs to the MscL family. In terms of assembly, homopentamer.

The protein resides in the cell inner membrane. In terms of biological role, channel that opens in response to stretch forces in the membrane lipid bilayer. May participate in the regulation of osmotic pressure changes within the cell. The sequence is that of Large-conductance mechanosensitive channel from Legionella pneumophila (strain Corby).